The sequence spans 146 residues: D-aminoacyl-tRNA deacylase (146 aa).

A Gly-cisPro motif, important for rejection of L-amino acids motif is present at residues 138 to 139 (GP).

This sequence belongs to the DTD family. As to quaternary structure, homodimer.

The protein resides in the cytoplasm. The catalysed reaction is glycyl-tRNA(Ala) + H2O = tRNA(Ala) + glycine + H(+). It catalyses the reaction a D-aminoacyl-tRNA + H2O = a tRNA + a D-alpha-amino acid + H(+). Its function is as follows. An aminoacyl-tRNA editing enzyme that deacylates mischarged D-aminoacyl-tRNAs. Also deacylates mischarged glycyl-tRNA(Ala), protecting cells against glycine mischarging by AlaRS. Acts via tRNA-based rather than protein-based catalysis; rejects L-amino acids rather than detecting D-amino acids in the active site. By recycling D-aminoacyl-tRNA to D-amino acids and free tRNA molecules, this enzyme counteracts the toxicity associated with the formation of D-aminoacyl-tRNA entities in vivo and helps enforce protein L-homochirality. The chain is D-aminoacyl-tRNA deacylase from Xanthomonas oryzae pv. oryzae (strain MAFF 311018).